Consider the following 258-residue polypeptide: Putative gamma-secretase subunit APH-1C (258 aa).

Helical transmembrane passes span 5–25 (VFFG…LFTI), 32–52 (VIFL…SSMF), 71–91 (LLIF…LAYY), 116–136 (LLAY…SFVN), 161–181 (AFMT…FFDG), 187–207 (WYTL…TFLS), and 214–234 (LVTA…VAGG).

The protein belongs to the APH-1 family. In terms of assembly, potential component of the gamma-secretase complex.

It is found in the membrane. In terms of biological role, potential subunit of the gamma-secretase complex, an endoprotease complex that catalyzes the intramembrane cleavage of integral proteins such as Notch receptors and APP (amyloid-beta precursor protein). The polypeptide is Putative gamma-secretase subunit APH-1C (Aph1c) (Mus musculus (Mouse)).